The primary structure comprises 319 residues: uncharacterized protein (319 aa).

An N-terminal signal peptide occupies residues 1 to 27 (MYKKFVPFAVFLFLFFVSFEMMENPHA). Residues 130 to 306 (PMVAFLINVA…QIKDKGYALG (177 aa)) form the NodB homology domain.

This sequence belongs to the polysaccharide deacetylase family.

This is an uncharacterized protein from Bacillus subtilis (strain 168).